The sequence spans 466 residues: Methylenetetrahydrofolate--tRNA-(uracil-5-)-methyltransferase TrmFO (466 aa).

14–19 (GGGLAG) is a binding site for FAD.

Belongs to the MnmG family. TrmFO subfamily. Requires FAD as cofactor.

Its subcellular location is the cytoplasm. The enzyme catalyses uridine(54) in tRNA + (6R)-5,10-methylene-5,6,7,8-tetrahydrofolate + NADH + H(+) = 5-methyluridine(54) in tRNA + (6S)-5,6,7,8-tetrahydrofolate + NAD(+). The catalysed reaction is uridine(54) in tRNA + (6R)-5,10-methylene-5,6,7,8-tetrahydrofolate + NADPH + H(+) = 5-methyluridine(54) in tRNA + (6S)-5,6,7,8-tetrahydrofolate + NADP(+). In terms of biological role, catalyzes the folate-dependent formation of 5-methyl-uridine at position 54 (M-5-U54) in all tRNAs. The polypeptide is Methylenetetrahydrofolate--tRNA-(uracil-5-)-methyltransferase TrmFO (Brucella canis (strain ATCC 23365 / NCTC 10854 / RM-666)).